The following is a 118-amino-acid chain: UPF0125 protein RSc1426 (118 aa).

This sequence belongs to the UPF0125 (RnfH) family.

In Ralstonia nicotianae (strain ATCC BAA-1114 / GMI1000) (Ralstonia solanacearum), this protein is UPF0125 protein RSc1426.